The primary structure comprises 427 residues: Serine hydroxymethyltransferase (427 aa).

(6S)-5,6,7,8-tetrahydrofolate is bound by residues Leu-122 and 126–128; that span reads GHL. N6-(pyridoxal phosphate)lysine is present on Lys-231. (6S)-5,6,7,8-tetrahydrofolate is bound by residues Glu-247 and 355 to 357; that span reads SPF.

Belongs to the SHMT family. In terms of assembly, homodimer. Requires pyridoxal 5'-phosphate as cofactor.

The protein resides in the cytoplasm. The catalysed reaction is (6R)-5,10-methylene-5,6,7,8-tetrahydrofolate + glycine + H2O = (6S)-5,6,7,8-tetrahydrofolate + L-serine. It functions in the pathway one-carbon metabolism; tetrahydrofolate interconversion. It participates in amino-acid biosynthesis; glycine biosynthesis; glycine from L-serine: step 1/1. Catalyzes the reversible interconversion of serine and glycine with tetrahydrofolate (THF) serving as the one-carbon carrier. This reaction serves as the major source of one-carbon groups required for the biosynthesis of purines, thymidylate, methionine, and other important biomolecules. Also exhibits THF-independent aldolase activity toward beta-hydroxyamino acids, producing glycine and aldehydes, via a retro-aldol mechanism. This chain is Serine hydroxymethyltransferase, found in Crocosphaera subtropica (strain ATCC 51142 / BH68) (Cyanothece sp. (strain ATCC 51142)).